We begin with the raw amino-acid sequence, 100 residues long: NAD(P)H-quinone oxidoreductase subunit 4L, chloroplastic (100 aa).

Transmembrane regions (helical) follow at residues 1–21 (MFGH…YGLI), 29–49 (ALMC…TFPN), and 63–83 (VFVI…VLAI).

Belongs to the complex I subunit 4L family. As to quaternary structure, NDH is composed of at least 16 different subunits, 5 of which are encoded in the nucleus.

It is found in the plastid. The protein localises to the chloroplast thylakoid membrane. It carries out the reaction a plastoquinone + NADH + (n+1) H(+)(in) = a plastoquinol + NAD(+) + n H(+)(out). The enzyme catalyses a plastoquinone + NADPH + (n+1) H(+)(in) = a plastoquinol + NADP(+) + n H(+)(out). Functionally, NDH shuttles electrons from NAD(P)H:plastoquinone, via FMN and iron-sulfur (Fe-S) centers, to quinones in the photosynthetic chain and possibly in a chloroplast respiratory chain. The immediate electron acceptor for the enzyme in this species is believed to be plastoquinone. Couples the redox reaction to proton translocation, and thus conserves the redox energy in a proton gradient. The sequence is that of NAD(P)H-quinone oxidoreductase subunit 4L, chloroplastic from Huperzia lucidula (Shining clubmoss).